The sequence spans 132 residues: Protein KRTCAP2 homolog (132 aa).

Helical transmembrane passes span 1 to 21 (MAVP…LIFS), 35 to 55 (MATV…LTAV), 69 to 89 (AKLF…CGMV), and 92 to 109 (VCAT…YYIN).

This sequence belongs to the KRTCAP2 family. As to quaternary structure, component of the oligosaccharyltransferase (OST) complex.

The protein localises to the membrane. Subunit of the oligosaccharyl transferase (OST) complex that catalyzes the initial transfer of a defined glycan (Glc(3)Man(9)GlcNAc(2) in eukaryotes) from the lipid carrier dolichol-pyrophosphate to an asparagine residue within an Asn-X-Ser/Thr consensus motif in nascent polypeptide chains, the first step in protein N-glycosylation. N-glycosylation occurs cotranslationally and the complex associates with the Sec61 complex at the channel-forming translocon complex that mediates protein translocation across the endoplasmic reticulum (ER). All subunits are required for a maximal enzyme activity. The sequence is that of Protein KRTCAP2 homolog from Aedes aegypti (Yellowfever mosquito).